Reading from the N-terminus, the 408-residue chain is uncharacterized protein (408 aa).

A helical transmembrane segment spans residues Tyr-56–Leu-76.

The protein belongs to the mycobacterial PPE family.

The protein localises to the cell membrane. This is an uncharacterized protein from Mycobacterium bovis (strain ATCC BAA-935 / AF2122/97).